The sequence spans 462 residues: Asparagine--tRNA ligase (462 aa).

It belongs to the class-II aminoacyl-tRNA synthetase family. In terms of assembly, homodimer.

The protein resides in the cytoplasm. The catalysed reaction is tRNA(Asn) + L-asparagine + ATP = L-asparaginyl-tRNA(Asn) + AMP + diphosphate + H(+). The protein is Asparagine--tRNA ligase of Borrelia garinii subsp. bavariensis (strain ATCC BAA-2496 / DSM 23469 / PBi) (Borreliella bavariensis).